The chain runs to 68 residues: Large ribosomal subunit protein uL30 (68 aa).

It belongs to the universal ribosomal protein uL30 family. Part of the 50S ribosomal subunit.

This is Large ribosomal subunit protein uL30 from Bartonella quintana (strain Toulouse) (Rochalimaea quintana).